Consider the following 284-residue polypeptide: Putative L-ribulose-5-phosphate 3-epimerase UlaE (284 aa).

It belongs to the L-ribulose-5-phosphate 3-epimerase family.

The enzyme catalyses L-ribulose 5-phosphate = L-xylulose 5-phosphate. It functions in the pathway cofactor degradation; L-ascorbate degradation; D-xylulose 5-phosphate from L-ascorbate: step 3/4. Catalyzes the isomerization of L-xylulose-5-phosphate to L-ribulose-5-phosphate. Is involved in the anaerobic L-ascorbate utilization. In Shigella dysenteriae serotype 1 (strain Sd197), this protein is Putative L-ribulose-5-phosphate 3-epimerase UlaE.